Here is a 203-residue protein sequence, read N- to C-terminus: MSAIERITKAAHLIDMNDIIREGNPTLRAIAEEVTFPLSDQEIILGEKMMQFLKHSQDPVMAEKMGLRGGVGLAAPQLDISKRIIAVLVPNIVEEGETPQEAYDLEAIMYNPKIVSHSVQDAALGEGEGCLSVDRNVPGYVVRHARVTVDYFDKDGEKHRIKLKGYNSIVVQHEIDHINGIMFYDRINEKDPFAVKDGLLILE.

Positions 130 and 173 each coordinate Fe cation. The active site involves Glu-174. His-177 provides a ligand contact to Fe cation.

This sequence belongs to the polypeptide deformylase family. Fe(2+) serves as cofactor.

The catalysed reaction is N-terminal N-formyl-L-methionyl-[peptide] + H2O = N-terminal L-methionyl-[peptide] + formate. Functionally, removes the formyl group from the N-terminal Met of newly synthesized proteins. Requires at least a dipeptide for an efficient rate of reaction. N-terminal L-methionine is a prerequisite for activity but the enzyme has broad specificity at other positions. The chain is Peptide deformylase from Streptococcus pneumoniae serotype 4 (strain ATCC BAA-334 / TIGR4).